Reading from the N-terminus, the 629-residue chain is tRNA uridine 5-carboxymethylaminomethyl modification enzyme MnmG (629 aa).

FAD is bound at residue 13 to 18 (GGGHAG). Position 273–287 (273–287 (GPRYCPSIEDKIHRF)) interacts with NAD(+).

It belongs to the MnmG family. As to quaternary structure, homodimer. Heterotetramer of two MnmE and two MnmG subunits. It depends on FAD as a cofactor.

It is found in the cytoplasm. Functionally, NAD-binding protein involved in the addition of a carboxymethylaminomethyl (cmnm) group at the wobble position (U34) of certain tRNAs, forming tRNA-cmnm(5)s(2)U34. The protein is tRNA uridine 5-carboxymethylaminomethyl modification enzyme MnmG of Shewanella baltica (strain OS155 / ATCC BAA-1091).